Here is a 281-residue protein sequence, read N- to C-terminus: RAD52 motif-containing protein 1 (281 aa).

The tract at residues 1–92 is necessary for nuclear localization and for nucleolar accumulation in response to heat shock; it reads MAELISFVVP…KPLFQTSPVK (92 aa). The region spanning 15–98 is the RRM domain; sequence KVLLVWDLST…SPVKVRLGTR (84 aa). The necessary for nuclear and nucleolar localization stretch occupies residues 90-133; that stretch reads PVKVRLGTRHKALQHQAFALNSSRCQELANYYFGFSGWSKRIIK.

As to quaternary structure, homodimer.

It is found in the nucleus. The protein localises to the cytoplasm. The protein resides in the nucleolus. Its subcellular location is the cajal body. It localises to the PML body. May confer resistance to the antitumor agent cisplatin. Binds to DNA and RNA. The chain is RAD52 motif-containing protein 1 (Rdm1) from Mus musculus (Mouse).